The primary structure comprises 531 residues: Na(+)/H(+) antiporter NhaB (531 aa).

The next 11 helical transmembrane spans lie at 23–45 (IAIL…VAGW), 66–86 (PGGL…SQVL), 97–117 (LLLI…LFVF), 130–164 (VSLM…FYSI), 206–226 (LLMH…VGEP), 244–264 (LRMG…CFLV), 307–327 (AFVG…VGLI), 352–372 (EEAL…GVII), 393–413 (LVIF…VFVG), 451–471 (ATPN…APLI), and 478–498 (MVWM…LAIE).

The protein belongs to the NhaB Na(+)/H(+) (TC 2.A.34) antiporter family.

It localises to the cell inner membrane. The catalysed reaction is 2 Na(+)(in) + 3 H(+)(out) = 2 Na(+)(out) + 3 H(+)(in). Na(+)/H(+) antiporter that extrudes sodium in exchange for external protons. This is Na(+)/H(+) antiporter NhaB from Shewanella loihica (strain ATCC BAA-1088 / PV-4).